Here is a 542-residue protein sequence, read N- to C-terminus: CTP synthase (542 aa).

The amidoligase domain stretch occupies residues 1 to 265 (MTRYVFITGG…DREVLGHFGL (265 aa)). S13 lines the CTP pocket. S13 contributes to the UTP binding site. ATP contacts are provided by residues 14-19 (SLGKGL) and D71. Positions 71 and 139 each coordinate Mg(2+). Residues 146-148 (DIE), 186-191 (KTKPTQ), and K222 each bind CTP. UTP is bound by residues 186 to 191 (KTKPTQ) and K222. The 251-residue stretch at 291-541 (SIAIVGKYTG…VGAAIEQSRL (251 aa)) folds into the Glutamine amidotransferase type-1 domain. G353 lines the L-glutamine pocket. Residue C380 is the Nucleophile; for glutamine hydrolysis of the active site. Residues 381–384 (FGMQ), E404, and R469 contribute to the L-glutamine site. Active-site residues include H514 and E516.

The protein belongs to the CTP synthase family. Homotetramer.

It catalyses the reaction UTP + L-glutamine + ATP + H2O = CTP + L-glutamate + ADP + phosphate + 2 H(+). The catalysed reaction is L-glutamine + H2O = L-glutamate + NH4(+). The enzyme catalyses UTP + NH4(+) + ATP = CTP + ADP + phosphate + 2 H(+). Its pathway is pyrimidine metabolism; CTP biosynthesis via de novo pathway; CTP from UDP: step 2/2. Its activity is regulated as follows. Allosterically activated by GTP, when glutamine is the substrate; GTP has no effect on the reaction when ammonia is the substrate. The allosteric effector GTP functions by stabilizing the protein conformation that binds the tetrahedral intermediate(s) formed during glutamine hydrolysis. Inhibited by the product CTP, via allosteric rather than competitive inhibition. Functionally, catalyzes the ATP-dependent amination of UTP to CTP with either L-glutamine or ammonia as the source of nitrogen. Regulates intracellular CTP levels through interactions with the four ribonucleotide triphosphates. The chain is CTP synthase from Methylobacterium radiotolerans (strain ATCC 27329 / DSM 1819 / JCM 2831 / NBRC 15690 / NCIMB 10815 / 0-1).